Here is a 109-residue protein sequence, read N- to C-terminus: Large ribosomal subunit protein eL30 (109 aa).

Belongs to the eukaryotic ribosomal protein eL30 family.

The protein is Large ribosomal subunit protein eL30 (RPL30) of Yarrowia lipolytica (strain CLIB 122 / E 150) (Yeast).